Reading from the N-terminus, the 90-residue chain is ATP synthase subunit e, mitochondrial (90 aa).

Serine 2 is modified (N-acetylserine). Residues 7 to 23 (VLRWSALGAGVVYGFVH) form a helical membrane-spanning segment.

In terms of assembly, F-type ATP synthases have 2 components, the catalytic core F(1) and the membrane-embedded component F(0), linked together by a central stalk and a peripheral stalk. The central stalk, also called rotor shaft, is often seen as part of F(1). The peripheral stalk is seen as part of F(0). F(0) contains the membrane channel next to the rotor. F-type ATP synthases form dimers but each monomer functions independently in ATP generation. The dimer consists of 17 different polypeptides: ATP1 (subunit alpha, 3 molecules per monomer, part of F(1)), ATP2 (subunit beta, 3 copies per monomer, part of F(1)), ATP3 (subunit gamma, part of the central stalk), ATP4 (subunit b, part of the peripheral stalk), ATP5/OSCP (subunit 5/OSCP, part of the peripheral stalk), ATP6 (subunit a, part of the peripheral stalk), ATP7 (subunit d, part of the peripheral stalk), ATP8 (subunit 8, part of the peripheral stalk), OLI1 (subunit c, part of the rotor, 10 molecules per monomer), ATP14 (subunit h, part of the peripheral stalk), ATP15 (subunit epsilon, part of the central stalk), ATP16 (subunit delta, part of the central stalk), ATP17 (subunit f, part of the peripheral stalk), ATP18 (subunit i/j, part of the peripheral stalk), ATP19 (subunit k, dimer-specific, at interface between monomers), ATP20 (subunit g, at interface between monomers), TIM11 (subunit e, at interface between monomers).

Its subcellular location is the mitochondrion inner membrane. Mitochondrial membrane ATP synthase (F(1)F(0) ATP synthase or Complex V) produces ATP from ADP in the presence of a proton gradient across the membrane which is generated by electron transport complexes of the respiratory chain. F-type ATP synthases consist of two structural domains, F(1) - containing the extramembraneous catalytic core, and F(0) - containing the membrane proton channel, linked together by a central stalk and a peripheral stalk. During catalysis, ATP synthesis in the catalytic domain of F(1) is coupled via a rotary mechanism of the central stalk subunits to proton translocation. Part of the complex F(0) domain. Minor subunit located with subunit a/ATP6 in the membrane. Together with subunit g/ATP20, probably contributes to membrane curvature at the site of the ATP synthase dimer, ultimately contributing to formation of cristae. The polypeptide is ATP synthase subunit e, mitochondrial (Yarrowia lipolytica (strain CLIB 122 / E 150) (Yeast)).